A 313-amino-acid chain; its full sequence is MSKVTVVGAGNVGATCANVLAFNEVADEVVMLDVKEGVSEGKAMDMMQTAQLLGFDTKVVGCTNDYEKTANSDVVVITSGIPRKPGMTREELIGVNAGIVKSVAQNILKYSPNAILVVISNPMDTMTYLSLKSLGLPKNRIIGMGGALDSSRFKYFLSQALGCNANEVEGMVIGGHGDTTMIPLARLATYKGIPVSKLLSAEKLQEVVASTMVGGATLTKLLGTSAWYAPGAAGAFVVESIIHNQGKMVPCSVYLEGEYGESDLCIGVPVILGKNGIEKIVELELTAEEKELFAKSAAAVHKTNEALKEVGAL.

NAD(+)-binding positions include 8–13 and Asp33; that span reads GAGNVG. 2 residues coordinate substrate: Arg83 and Arg89. NAD(+) contacts are provided by residues Asn96 and 119-121; that span reads ISN. 2 residues coordinate substrate: Asn121 and Arg152. His176 serves as the catalytic Proton acceptor.

Belongs to the LDH/MDH superfamily. MDH type 3 family.

The catalysed reaction is (S)-malate + NAD(+) = oxaloacetate + NADH + H(+). In terms of biological role, catalyzes the reversible oxidation of malate to oxaloacetate. The polypeptide is Malate dehydrogenase (Parabacteroides distasonis (strain ATCC 8503 / DSM 20701 / CIP 104284 / JCM 5825 / NCTC 11152)).